The primary structure comprises 458 residues: Glutamyl-tRNA reductase (458 aa).

Residues 49-52 (TCNR), S111, 116-118 (ETE), and Q122 contribute to the substrate site. The active-site Nucleophile is C50. 191-196 (GAGKMS) lines the NADP(+) pocket. Basic and acidic residues-rich tracts occupy residues 426-440 (IPKD…KEVE) and 448-458 (ERGHHESDFHN). Positions 426 to 458 (IPKDGEEHSSSKEVESVTQSSTERGHHESDFHN) are disordered.

The protein belongs to the glutamyl-tRNA reductase family. As to quaternary structure, homodimer.

The enzyme catalyses (S)-4-amino-5-oxopentanoate + tRNA(Glu) + NADP(+) = L-glutamyl-tRNA(Glu) + NADPH + H(+). It functions in the pathway porphyrin-containing compound metabolism; protoporphyrin-IX biosynthesis; 5-aminolevulinate from L-glutamyl-tRNA(Glu): step 1/2. Catalyzes the NADPH-dependent reduction of glutamyl-tRNA(Glu) to glutamate 1-semialdehyde (GSA). The polypeptide is Glutamyl-tRNA reductase (Natranaerobius thermophilus (strain ATCC BAA-1301 / DSM 18059 / JW/NM-WN-LF)).